Consider the following 181-residue polypeptide: Ribonuclease HII (181 aa).

Residues 1–181 (MICGIDEVGR…SLHRKSFRLI (181 aa)) form the RNase H type-2 domain. The a divalent metal cation site is built by Asp6, Glu7, and Asp98.

The protein belongs to the RNase HII family. Mn(2+) is required as a cofactor. Mg(2+) serves as cofactor.

The protein localises to the cytoplasm. It carries out the reaction Endonucleolytic cleavage to 5'-phosphomonoester.. Its function is as follows. Endonuclease that specifically degrades the RNA of RNA-DNA hybrids. In Borrelia recurrentis (strain A1), this protein is Ribonuclease HII.